The primary structure comprises 209 residues: High frequency lysogenization protein HflD homolog (209 aa).

Belongs to the HflD family.

The protein localises to the cytoplasm. Its subcellular location is the cell inner membrane. This chain is High frequency lysogenization protein HflD homolog, found in Saccharophagus degradans (strain 2-40 / ATCC 43961 / DSM 17024).